The following is a 216-amino-acid chain: Glycerol-3-phosphate acyltransferase (216 aa).

The next 5 helical transmembrane spans lie at 5-25, 70-90, 118-138, 140-160, and 164-184; these read LIAL…FGLV, IAAA…AGAF, VVFW…AAIF, ISSL…LAWG, and VAIM…ANIS. The segment covering 192 to 201 has biased composition (basic and acidic residues); the sequence is PRIGGKKSET. The segment at 192 to 216 is disordered; it reads PRIGGKKSETSADVSDGDDPDTPAT. Acidic residues predominate over residues 206–216; the sequence is SDGDDPDTPAT.

The protein belongs to the PlsY family. As to quaternary structure, probably interacts with PlsX.

The protein localises to the cell inner membrane. It carries out the reaction an acyl phosphate + sn-glycerol 3-phosphate = a 1-acyl-sn-glycero-3-phosphate + phosphate. It functions in the pathway lipid metabolism; phospholipid metabolism. Catalyzes the transfer of an acyl group from acyl-phosphate (acyl-PO(4)) to glycerol-3-phosphate (G3P) to form lysophosphatidic acid (LPA). This enzyme utilizes acyl-phosphate as fatty acyl donor, but not acyl-CoA or acyl-ACP. This is Glycerol-3-phosphate acyltransferase from Maricaulis maris (strain MCS10) (Caulobacter maris).